We begin with the raw amino-acid sequence, 341 residues long: KRR1 small subunit processome component homolog (341 aa).

The KH domain occupies Asp-126–Asn-194. Positions Lys-230–Lys-244 are enriched in basic residues. The disordered stretch occupies residues Lys-230 to Val-327. The stretch at Phe-271–Lys-341 forms a coiled coil. Basic and acidic residues-rich tracts occupy residues Leu-272–Asp-303 and Glu-313–Val-327.

It belongs to the KRR1 family. As to quaternary structure, monomer. Component of the ribosomal small subunit (SSU) processome.

Its subcellular location is the nucleus. It is found in the nucleolus. Required for 40S ribosome biogenesis. Involved in nucleolar processing of pre-18S ribosomal RNA and ribosome assembly. Binds to RNA. Required for female germline development, cell viability during eye development and for survival of dividing cells and epithelial cells during early wing disk development. This chain is KRR1 small subunit processome component homolog, found in Drosophila grimshawi (Hawaiian fruit fly).